The sequence spans 75 residues: Sec-independent protein translocase protein TatA (75 aa).

Residues 1-21 (MGSFSIWHWLIVLVIVVLVFG) form a helical membrane-spanning segment. Basic and acidic residues-rich tracts occupy residues 43–54 (MRDSEKSGEDVQ) and 66–75 (ATDKSHTVSH). Residues 43-75 (MRDSEKSGEDVQQKIGGDTLDAQATDKSHTVSH) form a disordered region.

It belongs to the TatA/E family. The Tat system comprises two distinct complexes: a TatABC complex, containing multiple copies of TatA, TatB and TatC subunits, and a separate TatA complex, containing only TatA subunits. Substrates initially bind to the TatABC complex, which probably triggers association of the separate TatA complex to form the active translocon.

The protein resides in the cell inner membrane. Part of the twin-arginine translocation (Tat) system that transports large folded proteins containing a characteristic twin-arginine motif in their signal peptide across membranes. TatA could form the protein-conducting channel of the Tat system. The protein is Sec-independent protein translocase protein TatA of Aromatoleum aromaticum (strain DSM 19018 / LMG 30748 / EbN1) (Azoarcus sp. (strain EbN1)).